Consider the following 215-residue polypeptide: Putative serine/threonine-protein kinase YrzF (215 aa).

Residues 27 to 215 form the Protein kinase domain; that stretch reads SEELTLIGKG…HFAQRKRKYS (189 aa). Residues 33 to 41 and K54 contribute to the ATP site; that span reads IGKGRSAYV. D135 functions as the Proton acceptor in the catalytic mechanism.

The protein belongs to the protein kinase superfamily. Ser/Thr protein kinase family.

The catalysed reaction is L-seryl-[protein] + ATP = O-phospho-L-seryl-[protein] + ADP + H(+). The enzyme catalyses L-threonyl-[protein] + ATP = O-phospho-L-threonyl-[protein] + ADP + H(+). The chain is Putative serine/threonine-protein kinase YrzF (yrzF) from Bacillus subtilis (strain 168).